A 757-amino-acid chain; its full sequence is RNA-directed RNA polymerase catalytic subunit (757 aa).

2 consecutive short sequence motifs (nuclear localization signal) follow at residues Arg-187–Met-195 and Arg-203–Gly-216. The interval Arg-249–Glu-256 is promoter-binding site. Residues Val-286 to Tyr-483 form the RdRp catalytic domain.

Belongs to the influenza viruses polymerase PB1 family. Influenza RNA polymerase is composed of three subunits: PB1, PB2 and PA. Interacts (via N-terminus) with PA (via C-terminus). Interacts (via C-terminus) with PB2 (via N-terminus); this interaction is essential for transcription initiation. Interacts (via C-terminus) with human PKP2 (via N-terminus); the interaction competitively inhibits the interaction between the RNA polymerase subunits PB1 and PB2. Post-translationally, phosphorylated by host PRKCA.

It localises to the host nucleus. The protein resides in the host cytoplasm. The catalysed reaction is RNA(n) + a ribonucleoside 5'-triphosphate = RNA(n+1) + diphosphate. In terms of biological role, RNA-dependent RNA polymerase which is responsible for replication and transcription of virus RNA segments. The transcription of viral mRNAs occurs by a unique mechanism called cap-snatching. 5' methylated caps of cellular mRNAs are cleaved after 10-13 nucleotides by PA. In turn, these short capped RNAs are used as primers by PB1 for transcription of viral mRNAs. During virus replication, PB1 initiates RNA synthesis and copy vRNA into complementary RNA (cRNA) which in turn serves as a template for the production of more vRNAs. This is RNA-directed RNA polymerase catalytic subunit from Influenza A virus (strain A/Swine/Ontario/2/1981 H1N1).